The sequence spans 205 residues: Small ribosomal subunit protein uS5 (205 aa).

Positions 49–112 (LVDEVLCIDM…TNAKLNIVKV (64 aa)) constitute an S5 DRBM domain.

This sequence belongs to the universal ribosomal protein uS5 family. Part of the 30S ribosomal subunit. Contacts protein S4.

With S4 and S12 plays an important role in translational accuracy. The polypeptide is Small ribosomal subunit protein uS5 (Methanocorpusculum labreanum (strain ATCC 43576 / DSM 4855 / Z)).